The following is a 77-amino-acid chain: Homeodomain-only protein (77 aa).

Residues 7-65 (AALGVRLTEDQVKVLEENFTKVSKHPDETTLMLIAAECGLSEEQTAVWFRMRNAQWRKA) constitute a DNA-binding region (homeobox; degenerate).

Its subcellular location is the nucleus. The protein localises to the cytoplasm. Its function is as follows. Atypical homeodomain protein which does not bind DNA and is required to modulate cardiac growth and development. May act via an interaction with SRF, leading to modulate the expression of SRF-dependent cardiac-specific genes and cardiac development. May act as a co-chaperone for HSPA1A and HSPA1B chaperone proteins and assist in chaperone-mediated protein refolding. The sequence is that of Homeodomain-only protein (hopx) from Danio rerio (Zebrafish).